Consider the following 301-residue polypeptide: MPT51 antigen (301 aa).

The signal sequence occupies residues 1–36; it reads MRGLSAVVRVLCVAALAVGVFAAAVLLAGTAGNAKA.

The protein belongs to the mycobacterial A85 antigen family. Homodimer.

It is found in the secreted. Functionally, may have a role in host tissue attachment, whereby ligands may include the serum protein fibronectin and small sugars. The chain is MPT51 antigen (mpt51) from Mycobacterium leprae (strain TN).